Reading from the N-terminus, the 498-residue chain is Protein MGF 505-5R (498 aa).

The protein belongs to the asfivirus MGF 505 family.

In terms of biological role, plays a role in virus cell tropism, and may be required for efficient virus replication in macrophages. The sequence is that of Protein MGF 505-5R from Ornithodoros (relapsing fever ticks).